A 226-amino-acid polypeptide reads, in one-letter code: Leucyl/phenylalanyl-tRNA--protein transferase (226 aa).

Belongs to the L/F-transferase family.

It localises to the cytoplasm. The enzyme catalyses N-terminal L-lysyl-[protein] + L-leucyl-tRNA(Leu) = N-terminal L-leucyl-L-lysyl-[protein] + tRNA(Leu) + H(+). The catalysed reaction is N-terminal L-arginyl-[protein] + L-leucyl-tRNA(Leu) = N-terminal L-leucyl-L-arginyl-[protein] + tRNA(Leu) + H(+). It carries out the reaction L-phenylalanyl-tRNA(Phe) + an N-terminal L-alpha-aminoacyl-[protein] = an N-terminal L-phenylalanyl-L-alpha-aminoacyl-[protein] + tRNA(Phe). Functions in the N-end rule pathway of protein degradation where it conjugates Leu, Phe and, less efficiently, Met from aminoacyl-tRNAs to the N-termini of proteins containing an N-terminal arginine or lysine. The sequence is that of Leucyl/phenylalanyl-tRNA--protein transferase from Pseudomonas entomophila (strain L48).